The sequence spans 329 residues: Sideroflexin (329 aa).

Transmembrane regions (helical) follow at residues 95–115 (AFLPINVIICAGLILPNASIG), 147–167 (ILEAYASAVGISCSLAVGLGW), 183–203 (LRMMVPFTAVTSAGIANVLIM), 238–258 (FSRAATSFPALLLPPIVMGLF), and 274–294 (LNLAVIAAIFNTSLPAAIALF).

The protein belongs to the sideroflexin family.

It localises to the mitochondrion membrane. Mitochondrial amino-acid transporter that mediates transport of serine into mitochondria. The sequence is that of Sideroflexin from Dictyostelium discoideum (Social amoeba).